Here is a 270-residue protein sequence, read N- to C-terminus: MVKVAVTGALGRMGSGIIKTITETDGLDVVAAIDIPNHPKKGQDIGELTGLGKIGVSLSTSDELEAILKESGAEVLVDFTAAAPCVNTAKTAAKLGVNLVIGTTGFTPEQRAEMENAISENKVAATISQNYAVGVNIFFKTLELLAQKLGDYDIEILEMHHKFKKDAPSGTALRAAEIIQNNLNRDSNIIYGREGITGERTKEEICIHALRGGDIVGDHTVIFTTDGERLELSHRVTSRQSLVSGAIRAIQFVADKKEGIYNTFDVLDLN.

Residues 8 to 13 (GALGRM), Asp-34, 102 to 104 (GTT), and 128 to 131 (SQNY) contribute to the NAD(+) site. His-160 functions as the Proton donor/acceptor in the catalytic mechanism. His-161 contacts (S)-2,3,4,5-tetrahydrodipicolinate. The active-site Proton donor is Lys-164. 170–171 (GT) serves as a coordination point for (S)-2,3,4,5-tetrahydrodipicolinate.

It belongs to the DapB family.

It localises to the cytoplasm. It catalyses the reaction (S)-2,3,4,5-tetrahydrodipicolinate + NAD(+) + H2O = (2S,4S)-4-hydroxy-2,3,4,5-tetrahydrodipicolinate + NADH + H(+). The catalysed reaction is (S)-2,3,4,5-tetrahydrodipicolinate + NADP(+) + H2O = (2S,4S)-4-hydroxy-2,3,4,5-tetrahydrodipicolinate + NADPH + H(+). It functions in the pathway amino-acid biosynthesis; L-lysine biosynthesis via DAP pathway; (S)-tetrahydrodipicolinate from L-aspartate: step 4/4. Functionally, catalyzes the conversion of 4-hydroxy-tetrahydrodipicolinate (HTPA) to tetrahydrodipicolinate. In Methanococcus maripaludis (strain C7 / ATCC BAA-1331), this protein is 4-hydroxy-tetrahydrodipicolinate reductase.